A 181-amino-acid chain; its full sequence is Transmembrane protein 154 (181 aa).

The signal sequence occupies residues 1–22; it reads MTVPCAALVLALGLAFGQSSQG. The disordered stretch occupies residues 19–47; that stretch reads SSQGNDEESEYSGQSITEEENSEDETTRS. The Extracellular portion of the chain corresponds to 23–74; it reads NDEESEYSGQSITEEENSEDETTRSALATVTTEALAENVNSTHTNDTSNQVE. A helical transmembrane segment spans residues 75–95; sequence FILMVAIPLAALLILLFMVLI. The Cytoplasmic segment spans residues 96-181; it reads ATYFKSKRPK…PNPSPSDNES (86 aa). The segment at 103–122 is disordered; it reads RPKQEPSSQGSQSALQTHEL. Over residues 107 to 118 the composition is skewed to polar residues; sequence EPSSQGSQSALQ. Position 160 is a phosphotyrosine (Tyr160). The interval 161–181 is disordered; that stretch reads ECLPTLKEEKEPNPSPSDNES. Position 177 is a phosphoserine (Ser177).

The protein localises to the membrane. This chain is Transmembrane protein 154 (Tmem154), found in Mus musculus (Mouse).